Here is a 173-residue protein sequence, read N- to C-terminus: Photosystem I assembly protein Ycf3 (173 aa).

TPR repeat units follow at residues 35–68 (AFVY…EEDT), 72–105 (GYIL…NPRL), and 120–153 (GEKA…APNN).

The protein belongs to the Ycf3 family.

It is found in the cellular thylakoid membrane. Functionally, essential for the assembly of the photosystem I (PSI) complex. May act as a chaperone-like factor to guide the assembly of the PSI subunits. The polypeptide is Photosystem I assembly protein Ycf3 (Nostoc sp. (strain PCC 7120 / SAG 25.82 / UTEX 2576)).